Here is a 948-residue protein sequence, read N- to C-terminus: PHD finger protein 14 (948 aa).

The disordered stretch occupies residues aspartate 22 to serine 302. 2 positions are modified to phosphoserine: serine 26 and serine 29. Residues alanine 36–glutamate 47 are compositionally biased toward low complexity. Positions aspartate 60–asparagine 71 are enriched in acidic residues. The segment covering glutamate 72–alanine 85 has biased composition (basic and acidic residues). Residues serine 84 and serine 91 each carry the phosphoserine modification. Composition is skewed to basic and acidic residues over residues glutamine 95–arginine 110 and lysine 117–threonine 139. The segment covering valine 140–glutamate 174 has biased composition (low complexity). Serine 196 carries the post-translational modification Phosphoserine. 2 stretches are compositionally biased toward acidic residues: residues glutamate 199–asparagine 212 and aspartate 233–aspartate 256. Tyrosine 206 is modified (phosphotyrosine). At serine 208 the chain carries Phosphoserine. Phosphothreonine is present on threonine 287. Positions asparagine 288–lysine 297 are enriched in polar residues. Residues serine 290, serine 294, serine 298, serine 302, and serine 308 each carry the phosphoserine modification. The PHD-type 1 zinc-finger motif lies at isoleucine 319 to glycine 380. Residues cysteine 322, cysteine 325, cysteine 339, cysteine 342, histidine 347, and cysteine 350 each contribute to the Zn(2+) site. At serine 359 the chain carries Phosphoserine. Residues cysteine 374, cysteine 377, cysteine 385, cysteine 388, histidine 405, cysteine 408, cysteine 441, cysteine 444, cysteine 458, cysteine 463, histidine 468, cysteine 471, cysteine 495, and histidine 498 each contribute to the Zn(2+) site. The C2HC pre-PHD-type zinc finger occupies serine 382 to valine 415. Residues lysine 439–alanine 499 form a PHD-type 2 zinc finger. Serine 530 is subject to Phosphoserine. Residues methionine 630–glutamate 678 adopt a coiled-coil conformation. Residue glutamate 648 forms a Glycyl lysine isopeptide (Lys-Gly) (interchain with G-Cter in SUMO2) linkage. Glutamine 651 bears the Phosphoserine mark. The PHD-type 3 zinc-finger motif lies at leucine 725–alanine 779. The Zn(2+) site is built by cysteine 728, cysteine 731, cysteine 743, cysteine 746, histidine 751, cysteine 754, cysteine 773, and cysteine 776. Phosphoserine occurs at positions 781, 782, and 835. Residues valine 811–proline 862 are disordered. The segment covering phenylalanine 836–glutamate 850 has biased composition (basic and acidic residues). The PHD-type 4 zinc-finger motif lies at arginine 868 to serine 921. Zn(2+)-binding residues include cysteine 871, cysteine 874, cysteine 886, cysteine 889, histidine 894, cysteine 897, cysteine 915, and cysteine 918. The disordered stretch occupies residues serine 920 to lysine 948. The span at serine 922–isoleucine 935 shows a compositional bias: basic and acidic residues. Polar residues predominate over residues serine 936–lysine 948.

Its subcellular location is the nucleus. It is found in the chromosome. The protein localises to the cytoplasm. Functionally, histone-binding protein. Binds preferentially to unmodified histone H3 but can also bind to a lesser extent to histone H3 trimethylated at 'Lys-9' (H3K9me3) as well as to histone H3 monomethylated at 'Lys-27' (H3K27ac) and trimethylated at 'Lys-27' (H3K27me3). Represses PDGFRA expression, thus playing a role in regulation of mesenchymal cell proliferation. Suppresses the expression of CDKN1A/p21 by reducing the level of trimethylation of histone H3 'Lys-4', leading to enhanced proliferation of germinal center B cells. This chain is PHD finger protein 14 (PHF14), found in Homo sapiens (Human).